Consider the following 532-residue polypeptide: Metal-staphylopine-binding protein CntA (532 aa).

The first 20 residues, 1–20, serve as a signal peptide directing secretion; it reads MRKLTKMSAMLLASGLILTG. Cysteine 21 carries the N-palmitoyl cysteine lipid modification. Cysteine 21 is lipidated: S-diacylglycerol cysteine. Residues arginine 165, arginine 418, and asparagine 448 each coordinate staphylopine.

This sequence belongs to the bacterial solute-binding protein 5 family. In terms of assembly, the complex is composed of two ATP-binding proteins (CntD and CntF), two transmembrane proteins (CntB and CntC) and a solute-binding protein (CntA).

It is found in the cell membrane. With respect to regulation, nickel/cobalt import is reduced in the presence of zinc. Part of the ABC transporter complex CntABCDF (Opp1) involved in the uptake of metal in complex with the metallophore staphylopine (StP). Involved in the import of divalent metals ions such as nickel, cobalt and zinc. Binds the metal via the metallophore StP, and transfers the StP-metal complex to the membrane-bound permease. Binds one molecule of StP/metal. Binds StP/Co(2+) and StP/Ni(2+) tighter than StP/Zn(2+). Plays a major role in nickel/cobalt import in zinc-depleted conditions. Contributes to virulence. Required for full urease activity in vitro. This chain is Metal-staphylopine-binding protein CntA, found in Staphylococcus aureus (strain NCTC 8325 / PS 47).